Here is a 230-residue protein sequence, read N- to C-terminus: Small ribosomal subunit protein uS2 (230 aa).

The protein belongs to the universal ribosomal protein uS2 family.

This Prochlorococcus marinus (strain NATL2A) protein is Small ribosomal subunit protein uS2.